The primary structure comprises 165 residues: Regulator of ribonuclease activity A (165 aa).

The protein belongs to the RraA family. In terms of assembly, homotrimer. Binds to both RNA-binding sites in the C-terminal region of Rne and to RhlB.

It is found in the cytoplasm. Its function is as follows. Globally modulates RNA abundance by binding to RNase E (Rne) and regulating its endonucleolytic activity. Can modulate Rne action in a substrate-dependent manner by altering the composition of the degradosome. Modulates RNA-binding and helicase activities of the degradosome. The polypeptide is Regulator of ribonuclease activity A (Haemophilus ducreyi (strain 35000HP / ATCC 700724)).